The following is a 225-amino-acid chain: Uracil-DNA glycosylase (225 aa).

Aspartate 65 serves as the catalytic Proton acceptor.

It belongs to the uracil-DNA glycosylase (UDG) superfamily. UNG family.

The protein resides in the cytoplasm. It catalyses the reaction Hydrolyzes single-stranded DNA or mismatched double-stranded DNA and polynucleotides, releasing free uracil.. In terms of biological role, excises uracil residues from the DNA which can arise as a result of misincorporation of dUMP residues by DNA polymerase or due to deamination of cytosine. The polypeptide is Uracil-DNA glycosylase (Clostridium perfringens (strain SM101 / Type A)).